The chain runs to 390 residues: 23S rRNA (uracil(747)-C(5))-methyltransferase RlmC (390 aa).

[4Fe-4S] cluster is bound by residues Cys12, Cys20, Cys23, and Cys100. S-adenosyl-L-methionine is bound by residues Gln225, Phe254, Glu275, and Asn322. Cys349 functions as the Nucleophile in the catalytic mechanism.

This sequence belongs to the class I-like SAM-binding methyltransferase superfamily. RNA M5U methyltransferase family. RlmC subfamily.

It catalyses the reaction uridine(747) in 23S rRNA + S-adenosyl-L-methionine = 5-methyluridine(747) in 23S rRNA + S-adenosyl-L-homocysteine + H(+). In terms of biological role, catalyzes the formation of 5-methyl-uridine at position 747 (m5U747) in 23S rRNA. The sequence is that of 23S rRNA (uracil(747)-C(5))-methyltransferase RlmC from Shewanella baltica (strain OS155 / ATCC BAA-1091).